A 38-amino-acid polypeptide reads, in one-letter code: Photosystem I reaction center subunit IX (38 aa).

The helical transmembrane segment at 4–24 (FLTTAPVVAAIWFTATAGILI) threads the bilayer.

The protein belongs to the PsaJ family.

The protein localises to the cellular thylakoid membrane. Its function is as follows. May help in the organization of the PsaE and PsaF subunits. This Synechococcus sp. (strain CC9902) protein is Photosystem I reaction center subunit IX.